The sequence spans 112 residues: UPF0102 protein NIS_1551 (112 aa).

The protein belongs to the UPF0102 family.

The sequence is that of UPF0102 protein NIS_1551 from Nitratiruptor sp. (strain SB155-2).